The primary structure comprises 88 residues: Protein ORGAN SIZE RELATED 1 (88 aa).

The tract at residues 25 to 76 (ITARSVALLLFLSLLLLILPPFLPPLPPPPATLLLLPLLLMILLIFLAFSPS) is organ Size Related (OSR) domain. The next 2 membrane-spanning stretches (helical) occupy residues 30–50 (VALLLFLSLLLLILPPFLPPL) and 53–73 (PPATLLLLPLLLMILLIFLAF).

The protein belongs to the plant organ size related (OSR) protein family. In terms of tissue distribution, mostly expressed in flowers, and, to a lower extent, in leaves and cotyledons.

Its subcellular location is the membrane. The protein resides in the endoplasmic reticulum. The protein localises to the nucleus. It localises to the cytoplasm. In terms of biological role, together with ARGOS and ARL, regulates organ growth and final organ size. Promotes both cell expansion and proliferation-dependent organ growth, in an ANT-dependent manner. This Arabidopsis thaliana (Mouse-ear cress) protein is Protein ORGAN SIZE RELATED 1.